Consider the following 346-residue polypeptide: NADH-ubiquinone oxidoreductase chain 2 (346 aa).

A run of 11 helical transmembrane segments spans residues 1 to 21, 25 to 45, 60 to 80, 95 to 115, 124 to 144, 149 to 169, 178 to 195, 200 to 219, 242 to 262, 274 to 294, and 326 to 346; these read MNPH…TITI, HWVL…PLIS, FLTQ…NAWA, CLLL…HFWF, LMTA…LLLM, LNPA…GWMG, ILAF…IILV, LALL…FMAL, ATLM…GFMP, EMTP…FFYL, and AILA…HAIV.

It belongs to the complex I subunit 2 family.

The protein resides in the mitochondrion inner membrane. It carries out the reaction a ubiquinone + NADH + 5 H(+)(in) = a ubiquinol + NAD(+) + 4 H(+)(out). In terms of biological role, core subunit of the mitochondrial membrane respiratory chain NADH dehydrogenase (Complex I) that is believed to belong to the minimal assembly required for catalysis. Complex I functions in the transfer of electrons from NADH to the respiratory chain. The immediate electron acceptor for the enzyme is believed to be ubiquinone. The sequence is that of NADH-ubiquinone oxidoreductase chain 2 (MT-ND2) from Mareca penelope (Eurasian wigeon).